A 97-amino-acid chain; its full sequence is Cell division topological specificity factor (97 aa).

It belongs to the MinE family.

Its function is as follows. Prevents the cell division inhibition by proteins MinC and MinD at internal division sites while permitting inhibition at polar sites. This ensures cell division at the proper site by restricting the formation of a division septum at the midpoint of the long axis of the cell. The polypeptide is Cell division topological specificity factor (Synechococcus sp. (strain RCC307)).